The following is a 67-amino-acid chain: uncharacterized protein (67 aa).

It to E.coli YbdD.

This is an uncharacterized protein from Escherichia coli O157:H7.